A 224-amino-acid polypeptide reads, in one-letter code: Iron-sulfur cluster repair protein ScdA (224 aa).

The protein belongs to the RIC family. ScdA subfamily. Homodimer.

It is found in the cytoplasm. Its function is as follows. Di-iron-containing protein involved in the repair of iron-sulfur clusters damaged by oxidative and nitrosative stress conditions. The polypeptide is Iron-sulfur cluster repair protein ScdA (Staphylococcus epidermidis (strain ATCC 35984 / DSM 28319 / BCRC 17069 / CCUG 31568 / BM 3577 / RP62A)).